Consider the following 879-residue polypeptide: Leucine--tRNA ligase (879 aa).

Residues 43–53 (PYPSGRIHMGH) carry the 'HIGH' region motif. The 'KMSKS' region motif lies at 636 to 640 (KMSKS). K639 contacts ATP.

This sequence belongs to the class-I aminoacyl-tRNA synthetase family.

The protein resides in the cytoplasm. It carries out the reaction tRNA(Leu) + L-leucine + ATP = L-leucyl-tRNA(Leu) + AMP + diphosphate. The polypeptide is Leucine--tRNA ligase (Afipia carboxidovorans (strain ATCC 49405 / DSM 1227 / KCTC 32145 / OM5) (Oligotropha carboxidovorans)).